We begin with the raw amino-acid sequence, 116 residues long: Protein Rev (116 aa).

Phosphoserine; by host CK2 is present on residues S5 and S8. Residues 18 to 26 (LIKLLYQSN) are homomultimerization. The segment at 21–49 (LLYQSNPPPNPEGTRQARRNRRRRWRERQ) is disordered. The short motif at 34–50 (TRQARRNRRRRWRERQR) is the Nuclear localization signal and RNA-binding (RRE) element. Residues 36–47 (QARRNRRRRWRE) are compositionally biased toward basic residues. The Nuclear export signal and binding to XPO1 signature appears at 73–84 (LQLPPLERLTLD). Phosphoserine; by host occurs at positions 92 and 99. Residues 92 to 116 (SGTQGVGSPQILVESPTVLESGTKE) are disordered.

Belongs to the HIV-1 REV protein family. Homomultimer; when bound to the RRE. Multimeric assembly is essential for activity and may involve XPO1. Binds to human KPNB1, XPO1, TNPO1, RANBP5 and IPO7. Interacts with the viral Integrase. Interacts with human KHDRBS1. Interacts with human NAP1; this interaction decreases Rev multimerization and stimulates its activity. Interacts with human DEAD-box helicases DDX3 and DDX24; these interactions may serve for viral RNA export to the cytoplasm and packaging, respectively. Interacts with human PSIP1; this interaction may inhibit HIV-1 DNA integration by promoting dissociation of the Integrase-LEDGF/p75 complex. Post-translationally, asymmetrically arginine dimethylated at one site by host PRMT6. Methylation impairs the RNA-binding activity and export of viral RNA from the nucleus to the cytoplasm. In terms of processing, phosphorylated by protein kinase CK2. Presence of, and maybe binding to the N-terminus of the regulatory beta subunit of CK2 is necessary for CK2-mediated Rev's phosphorylation.

The protein localises to the host nucleus. It localises to the host nucleolus. Its subcellular location is the host cytoplasm. Escorts unspliced or incompletely spliced viral pre-mRNAs (late transcripts) out of the nucleus of infected cells. These pre-mRNAs carry a recognition sequence called Rev responsive element (RRE) located in the env gene, that is not present in fully spliced viral mRNAs (early transcripts). This function is essential since most viral proteins are translated from unspliced or partially spliced pre-mRNAs which cannot exit the nucleus by the pathway used by fully processed cellular mRNAs. Rev itself is translated from a fully spliced mRNA that readily exits the nucleus. Rev's nuclear localization signal (NLS) binds directly to KPNB1/Importin beta-1 without previous binding to KPNA1/Importin alpha-1. KPNB1 binds to the GDP bound form of RAN (Ran-GDP) and targets Rev to the nucleus. In the nucleus, the conversion from Ran-GDP to Ran-GTP dissociates Rev from KPNB1 and allows Rev's binding to the RRE in viral pre-mRNAs. Rev multimerization on the RRE via cooperative assembly exposes its nuclear export signal (NES) to the surface. Rev can then form a complex with XPO1/CRM1 and Ran-GTP, leading to nuclear export of the complex. Conversion from Ran-GTP to Ran-GDP mediates dissociation of the Rev/RRE/XPO1/RAN complex, so that Rev can return to the nucleus for a subsequent round of export. Beside KPNB1, also seems to interact with TNPO1/Transportin-1, RANBP5/IPO5 and IPO7/RANBP7 for nuclear import. The nucleoporin-like HRB/RIP is an essential cofactor that probably indirectly interacts with Rev to release HIV RNAs from the perinuclear region to the cytoplasm. The protein is Protein Rev of Homo sapiens (Human).